A 201-amino-acid polypeptide reads, in one-letter code: Small ribosomal subunit protein uS4 (201 aa).

One can recognise an S4 RNA-binding domain in the interval 91 to 157 (CRLDNVVYRA…TPFIIAKETI (67 aa)).

This sequence belongs to the universal ribosomal protein uS4 family. As to quaternary structure, part of the 30S ribosomal subunit. Contacts protein S5. The interaction surface between S4 and S5 is involved in control of translational fidelity.

Its function is as follows. One of the primary rRNA binding proteins, it binds directly to 16S rRNA where it nucleates assembly of the body of the 30S subunit. Functionally, with S5 and S12 plays an important role in translational accuracy. This is Small ribosomal subunit protein uS4 from Saccharopolyspora erythraea (strain ATCC 11635 / DSM 40517 / JCM 4748 / NBRC 13426 / NCIMB 8594 / NRRL 2338).